Consider the following 511-residue polypeptide: Chromosomal replication initiator protein DnaA (511 aa).

The segment at 1–90 (MSVELWQQCV…RRSSAPRAAP (90 aa)) is domain I, interacts with DnaA modulators. Positions 91 to 174 (NAPVSAAMAA…QVEGALKHTS (84 aa)) are domain II. The tract at residues 125-161 (TAEPAQASDMAEASSRDSYDSMADSAPAPVAPGRTEQ) is disordered. Positions 175 to 391 (YLNRTFTFET…GALKRVIAHS (217 aa)) are domain III, AAA+ region. ATP contacts are provided by G219, G221, K222, and T223. The interval 392 to 511 (HFMGRDITIE…YKNLLRTLTT (120 aa)) is domain IV, binds dsDNA.

The protein belongs to the DnaA family. In terms of assembly, oligomerizes as a right-handed, spiral filament on DNA at oriC.

Its subcellular location is the cytoplasm. Plays an essential role in the initiation and regulation of chromosomal replication. ATP-DnaA binds to the origin of replication (oriC) to initiate formation of the DNA replication initiation complex once per cell cycle. Binds the DnaA box (a 9 base pair repeat at the origin) and separates the double-stranded (ds)DNA. Forms a right-handed helical filament on oriC DNA; dsDNA binds to the exterior of the filament while single-stranded (ss)DNA is stabiized in the filament's interior. The ATP-DnaA-oriC complex binds and stabilizes one strand of the AT-rich DNA unwinding element (DUE), permitting loading of DNA polymerase. After initiation quickly degrades to an ADP-DnaA complex that is not apt for DNA replication. Binds acidic phospholipids. The sequence is that of Chromosomal replication initiator protein DnaA from Pseudomonas putida (strain W619).